Reading from the N-terminus, the 539-residue chain is Serine/threonine-protein kinase 35 (539 aa).

The disordered stretch occupies residues 103-161; sequence ITIQGPAPPHLGARRRDEARGARAAPLLLPPPPAAMETGKENGARRGTKSPERKRRSPV. A compositionally biased stretch (basic residues) spans 148 to 160; that stretch reads RGTKSPERKRRSP. One can recognise a Protein kinase domain in the interval 207 to 535; it reads YSLLAEIGRG…FELETRMDQV (329 aa). ATP-binding positions include 213–221 and Lys-236; that span reads IGRGSYGVV. The active-site Proton acceptor is Asp-365.

This sequence belongs to the protein kinase superfamily. Ser/Thr protein kinase family. As to quaternary structure, interacts with PDLIM1/CLP-36. In terms of processing, autophosphorylated.

The protein localises to the nucleus. It is found in the nucleolus. It localises to the cytoplasm. It carries out the reaction L-seryl-[protein] + ATP = O-phospho-L-seryl-[protein] + ADP + H(+). The catalysed reaction is L-threonyl-[protein] + ATP = O-phospho-L-threonyl-[protein] + ADP + H(+). This chain is Serine/threonine-protein kinase 35 (Stk35), found in Mus musculus (Mouse).